The following is a 228-amino-acid chain: Probable septum site-determining protein MinC (228 aa).

This sequence belongs to the MinC family. As to quaternary structure, interacts with MinD and FtsZ.

In terms of biological role, cell division inhibitor that blocks the formation of polar Z ring septums. Rapidly oscillates between the poles of the cell to destabilize FtsZ filaments that have formed before they mature into polar Z rings. Prevents FtsZ polymerization. This Bacillus mycoides (strain KBAB4) (Bacillus weihenstephanensis) protein is Probable septum site-determining protein MinC.